The chain runs to 1075 residues: Carbamoyl phosphate synthase large chain (1075 aa).

The tract at residues 1–403 (MPKRTDINTI…SLQKALRGLE (403 aa)) is carboxyphosphate synthetic domain. 12 residues coordinate ATP: R129, R169, G175, G176, Q208, V210, E215, G241, V242, H243, Q285, and E299. The ATP-grasp 1 domain maps to 133–328 (KDAMTKIGLN…IAKVAAKLAV (196 aa)). Residues Q285, E299, and N301 each coordinate Mg(2+). 3 residues coordinate Mn(2+): Q285, E299, and N301. The segment at 404–548 (IGICGFNLRS…YSTYEDECEA (145 aa)) is oligomerization domain. Positions 549 to 930 (KPTTRQKVMI…AYYKAQLGAG (382 aa)) are carbamoyl phosphate synthetic domain. The 192-residue stretch at 673-864 (QKILTDLGLK…LAKIAALVMA (192 aa)) folds into the ATP-grasp 2 domain. Residues R709, H748, L750, E755, G780, I781, H782, S783, Q823, and E835 each coordinate ATP. Residues Q823, E835, and N837 each contribute to the Mg(2+) site. Residues Q823, E835, and N837 each coordinate Mn(2+). Residues 931 to 1070 (ERIPSTGKVF…QQLHLSSALA (140 aa)) enclose the MGS-like domain. The interval 931 to 1075 (ERIPSTGKVF…SSALANQITR (145 aa)) is allosteric domain.

This sequence belongs to the CarB family. Composed of two chains; the small (or glutamine) chain promotes the hydrolysis of glutamine to ammonia, which is used by the large (or ammonia) chain to synthesize carbamoyl phosphate. Tetramer of heterodimers (alpha,beta)4. Requires Mg(2+) as cofactor. Mn(2+) serves as cofactor.

It carries out the reaction hydrogencarbonate + L-glutamine + 2 ATP + H2O = carbamoyl phosphate + L-glutamate + 2 ADP + phosphate + 2 H(+). The catalysed reaction is hydrogencarbonate + NH4(+) + 2 ATP = carbamoyl phosphate + 2 ADP + phosphate + 2 H(+). It functions in the pathway amino-acid biosynthesis; L-arginine biosynthesis; carbamoyl phosphate from bicarbonate: step 1/1. Its pathway is pyrimidine metabolism; UMP biosynthesis via de novo pathway; (S)-dihydroorotate from bicarbonate: step 1/3. In terms of biological role, large subunit of the glutamine-dependent carbamoyl phosphate synthetase (CPSase). CPSase catalyzes the formation of carbamoyl phosphate from the ammonia moiety of glutamine, carbonate, and phosphate donated by ATP, constituting the first step of 2 biosynthetic pathways, one leading to arginine and/or urea and the other to pyrimidine nucleotides. The large subunit (synthetase) binds the substrates ammonia (free or transferred from glutamine from the small subunit), hydrogencarbonate and ATP and carries out an ATP-coupled ligase reaction, activating hydrogencarbonate by forming carboxy phosphate which reacts with ammonia to form carbamoyl phosphate. This Haemophilus ducreyi (strain 35000HP / ATCC 700724) protein is Carbamoyl phosphate synthase large chain.